The sequence spans 422 residues: Putative polyketide beta-ketoacyl synthase 1 (422 aa).

One can recognise a Ketosynthase family 3 (KS3) domain in the interval 2–416; the sequence is SRRVVVTGIG…GFQSAVVLTG (415 aa). Active-site for beta-ketoacyl synthase activity residues include C169, H309, and H346.

The protein belongs to the thiolase-like superfamily. Beta-ketoacyl-ACP synthases family.

Involved in developmentally regulated synthesis of a compound biosynthetically related to polyketide antibiotics which is essential for spore color in Streptomyces halstedii. The chain is Putative polyketide beta-ketoacyl synthase 1 (sch1) from Streptomyces halstedii.